The chain runs to 81 residues: MKTLLLTLVVVTIVCLDLGYTMTCCNQQSSQPKTTTNCAESSCYKKTWSDHRGTRIERGCGCPQVKHGIKLECCHTNECNN.

The N-terminal stretch at 1-21 (MKTLLLTLVVVTIVCLDLGYT) is a signal peptide. 4 disulfides stabilise this stretch: Cys-24/Cys-43, Cys-38/Cys-60, Cys-62/Cys-73, and Cys-74/Cys-79.

The protein belongs to the three-finger toxin family. Short-chain subfamily. Type I alpha-neurotoxin sub-subfamily. As to expression, expressed by the venom gland.

The protein localises to the secreted. Its function is as follows. Binds to muscle nicotinic acetylcholine receptor (nAChR) and inhibit acetylcholine from binding to the receptor, thereby impairing neuromuscular transmission. The protein is Short neurotoxin 2 of Hydrophis hardwickii (Hardwick's spine-bellied seasnake).